A 381-amino-acid polypeptide reads, in one-letter code: Succinyl-diaminopimelate desuccinylase (381 aa).

His-68 contributes to the Zn(2+) binding site. Asp-70 is an active-site residue. Asp-101 provides a ligand contact to Zn(2+). The Proton acceptor role is filled by Glu-135. Zn(2+) contacts are provided by Glu-136, Glu-164, and His-350.

Belongs to the peptidase M20A family. DapE subfamily. In terms of assembly, homodimer. Zn(2+) serves as cofactor. It depends on Co(2+) as a cofactor.

The catalysed reaction is N-succinyl-(2S,6S)-2,6-diaminopimelate + H2O = (2S,6S)-2,6-diaminopimelate + succinate. Its pathway is amino-acid biosynthesis; L-lysine biosynthesis via DAP pathway; LL-2,6-diaminopimelate from (S)-tetrahydrodipicolinate (succinylase route): step 3/3. Functionally, catalyzes the hydrolysis of N-succinyl-L,L-diaminopimelic acid (SDAP), forming succinate and LL-2,6-diaminopimelate (DAP), an intermediate involved in the bacterial biosynthesis of lysine and meso-diaminopimelic acid, an essential component of bacterial cell walls. This is Succinyl-diaminopimelate desuccinylase from Neisseria meningitidis serogroup A / serotype 4A (strain DSM 15465 / Z2491).